The sequence spans 398 residues: tRNA-specific 2-thiouridylase MnmA (398 aa).

ATP is bound by residues 18–25 (AMSGGVDS) and L44. C112 (nucleophile) is an active-site residue. A disulfide bridge links C112 with C213. G136 is a binding site for ATP. Residues 163–165 (RDQ) form an interaction with tRNA region. The active-site Cysteine persulfide intermediate is the C213.

The protein belongs to the MnmA/TRMU family.

The protein resides in the cytoplasm. The enzyme catalyses S-sulfanyl-L-cysteinyl-[protein] + uridine(34) in tRNA + AH2 + ATP = 2-thiouridine(34) in tRNA + L-cysteinyl-[protein] + A + AMP + diphosphate + H(+). Catalyzes the 2-thiolation of uridine at the wobble position (U34) of tRNA, leading to the formation of s(2)U34. In Rhizobium meliloti (strain 1021) (Ensifer meliloti), this protein is tRNA-specific 2-thiouridylase MnmA.